Consider the following 398-residue polypeptide: Chalcone synthase (398 aa).

The active site involves Cys-167.

Belongs to the thiolase-like superfamily. Chalcone/stilbene synthases family.

It catalyses the reaction (E)-4-coumaroyl-CoA + 3 malonyl-CoA + 3 H(+) = 2',4,4',6'-tetrahydroxychalcone + 3 CO2 + 4 CoA. The protein operates within secondary metabolite biosynthesis; flavonoid biosynthesis. The primary product of this enzyme is 4,2',4',6'-tetrahydroxychalcone (also termed naringenin-chalcone or chalcone) which can under specific conditions spontaneously isomerize into naringenin. This is Chalcone synthase (CHS) from Callistephus chinensis (China aster).